Reading from the N-terminus, the 207-residue chain is dITP/XTP pyrophosphatase (207 aa).

16 to 21 (SNNKGK) is a substrate binding site. The active-site Proton acceptor is the D79. D79 contributes to the Mg(2+) binding site. Residues S80, 166–169 (FGYD), K189, and 194–195 (HR) contribute to the substrate site.

It belongs to the HAM1 NTPase family. In terms of assembly, homodimer. Mg(2+) serves as cofactor.

The catalysed reaction is XTP + H2O = XMP + diphosphate + H(+). The enzyme catalyses dITP + H2O = dIMP + diphosphate + H(+). It carries out the reaction ITP + H2O = IMP + diphosphate + H(+). Functionally, pyrophosphatase that catalyzes the hydrolysis of nucleoside triphosphates to their monophosphate derivatives, with a high preference for the non-canonical purine nucleotides XTP (xanthosine triphosphate), dITP (deoxyinosine triphosphate) and ITP. Seems to function as a house-cleaning enzyme that removes non-canonical purine nucleotides from the nucleotide pool, thus preventing their incorporation into DNA/RNA and avoiding chromosomal lesions. This Acinetobacter baumannii (strain ATCC 17978 / DSM 105126 / CIP 53.77 / LMG 1025 / NCDC KC755 / 5377) protein is dITP/XTP pyrophosphatase.